The primary structure comprises 513 residues: MATSSSAWLMFSDHYPEILIAIACFLIFSLLLSARSSSKDSLPYNWPIFGMLPAIISNNQFNDFTTARLRKMGWTFIFKGPWLLDMDYIFTCDPSNINHMFNDNFENYPKGELGKVFDIFGNNIFNADGDLWHDHRKMAQTILWDGNYRTMQATFIRNKMDNALIPILDSAACKRKPVDLQDVLLRFTFDTSCFSVLAADPESLTMEFPPVPFSKAADQALDAALTRHITPRLIWKLKRFFNVGSERTLAVAWKVIDSYIYDKIAELKAKRKLVGKINSYDAVSFYMDNFNIHDDKFLRDNAFTYLLAQRNTQSLTMTWLFYALFENPKVELKILSELKSIVDESSERKFNDGFALFDSNMIQSAIYLHATLCEALRIYPPVPFEIKDAHKADVLPSGHKVRAGEKILFSPYAMARMKGIWGDDCLEFKPERWITGNGTLKHEPAYKFFAFSAGPRICLGKELSFTQMKMVVATIIYNFHLQMVKGHVVEQSNSILMDMKHGLMVQVRKRSVM.

A helical membrane pass occupies residues 14-34 (HYPEILIAIACFLIFSLLLSA). Cysteine 458 serves as a coordination point for heme.

This sequence belongs to the cytochrome P450 family. Requires heme as cofactor. Mostly expressed in stems, and, to a lower extent, in bulbs, roots, leaves and flowers.

Its subcellular location is the membrane. It catalyses the reaction 4'-O-methylnorbelladine + reduced [NADPH--hemoprotein reductase] + O2 = (10bR,4aS)-noroxomaritidine + oxidized [NADPH--hemoprotein reductase] + 2 H2O + H(+). The catalysed reaction is 4'-O-methylnorbelladine + reduced [NADPH--hemoprotein reductase] + O2 = (10bS,4aR)-noroxomaritidine + oxidized [NADPH--hemoprotein reductase] + 2 H2O + H(+). The protein operates within alkaloid biosynthesis. Its function is as follows. Cytochrome P450 that catalyzes an intramolecular para-para' C-C phenol coupling of 4'-O-methylnorbelladine in alkaloids biosynthesis, including haemanthamine- and crinamine-type alkaloids, promising anticancer agents. Catalyzes the formation of (10bR,4aS)-noroxomaritidine and (10bS,4aR)-noroxomaritidine from 4'-O-methylnorbelladine. This chain is Noroxomaritidine synthase 2, found in Narcissus pseudonarcissus (Daffodil).